Here is a 465-residue protein sequence, read N- to C-terminus: UDP-N-acetylmuramoylalanine--D-glutamate ligase (465 aa).

112–118 (GTDGKTT) contributes to the ATP binding site.

Belongs to the MurCDEF family.

It is found in the cytoplasm. It catalyses the reaction UDP-N-acetyl-alpha-D-muramoyl-L-alanine + D-glutamate + ATP = UDP-N-acetyl-alpha-D-muramoyl-L-alanyl-D-glutamate + ADP + phosphate + H(+). It participates in cell wall biogenesis; peptidoglycan biosynthesis. In terms of biological role, cell wall formation. Catalyzes the addition of glutamate to the nucleotide precursor UDP-N-acetylmuramoyl-L-alanine (UMA). The chain is UDP-N-acetylmuramoylalanine--D-glutamate ligase from Chlorobium limicola (strain DSM 245 / NBRC 103803 / 6330).